Here is a 369-residue protein sequence, read N- to C-terminus: 4-hydroxy-3-methylbut-2-en-1-yl diphosphate synthase (flavodoxin) (369 aa).

The [4Fe-4S] cluster site is built by Cys-270, Cys-273, Cys-305, and Glu-312.

This sequence belongs to the IspG family. Requires [4Fe-4S] cluster as cofactor.

It carries out the reaction (2E)-4-hydroxy-3-methylbut-2-enyl diphosphate + oxidized [flavodoxin] + H2O + 2 H(+) = 2-C-methyl-D-erythritol 2,4-cyclic diphosphate + reduced [flavodoxin]. It participates in isoprenoid biosynthesis; isopentenyl diphosphate biosynthesis via DXP pathway; isopentenyl diphosphate from 1-deoxy-D-xylulose 5-phosphate: step 5/6. In terms of biological role, converts 2C-methyl-D-erythritol 2,4-cyclodiphosphate (ME-2,4cPP) into 1-hydroxy-2-methyl-2-(E)-butenyl 4-diphosphate. This Pseudomonas savastanoi pv. phaseolicola (strain 1448A / Race 6) (Pseudomonas syringae pv. phaseolicola (strain 1448A / Race 6)) protein is 4-hydroxy-3-methylbut-2-en-1-yl diphosphate synthase (flavodoxin).